Consider the following 406-residue polypeptide: 5-cytosine rRNA methyltransferase NSUN4 (406 aa).

Residues Gly-207, Gly-208, Lys-209, Asp-226, Arg-231, Asp-259, Gly-260, and Asp-277 each coordinate S-adenosyl-L-methionine. The active-site Nucleophile is the Cys-332.

It belongs to the class I-like SAM-binding methyltransferase superfamily. RsmB/NOP family.

It localises to the mitochondrion. It catalyses the reaction a cytidine in rRNA + S-adenosyl-L-methionine = a 5-methylcytidine in rRNA + S-adenosyl-L-homocysteine + H(+). It carries out the reaction a cytidine in mRNA + S-adenosyl-L-methionine = a 5-methylcytidine in mRNA + S-adenosyl-L-homocysteine + H(+). Mitochondrial RNA cytosine C(5)-methyltransferase that methylates cytosine to 5-methylcytosine (m5C) in various RNAs, such as rRNAs, mRNAs and some long non-coding RNAs (lncRNAs). Involved in mitochondrial ribosome small subunit (SSU) maturation by catalyzing methylation of mitochondrial 12S rRNA. The polypeptide is 5-cytosine rRNA methyltransferase NSUN4 (nsun4) (Xenopus laevis (African clawed frog)).